We begin with the raw amino-acid sequence, 367 residues long: Carbohydrate sulfotransferase 14 (367 aa).

The Cytoplasmic portion of the chain corresponds to 1–34 (MPPRKKEYGIKRASGSLVHFRAPVSATTIRRHSA). Residues 35–55 (VVPSVLTFAVIVASGGLLLMI) form a helical; Signal-anchor for type II membrane protein membrane-spanning segment. The Lumenal portion of the chain corresponds to 56 to 367 (EKGMLNSVQT…PNTTTEYCRH (312 aa)). The N-linked (GlcNAc...) asparagine glycan is linked to Asn99. 3'-phosphoadenylyl sulfate is bound by residues 144-150 (PKVACSN) and 202-210 (REPMARLLS). An N-linked (GlcNAc...) asparagine glycan is attached at Asn359.

The protein belongs to the sulfotransferase 2 family.

The protein resides in the golgi apparatus membrane. Its function is as follows. Catalyzes the transfer of sulfate to position 4 of the N-acetylgalactosamine (GalNAc) residue of dermatan sulfate. The chain is Carbohydrate sulfotransferase 14 (chst14) from Danio rerio (Zebrafish).